We begin with the raw amino-acid sequence, 496 residues long: Trimethylamine methyltransferase MttB (496 aa).

A non-standard amino acid (pyrrolysine) is located at residue Pyl-331.

Belongs to the trimethylamine methyltransferase family.

The enzyme catalyses Co(I)-[trimethylamine-specific corrinoid protein] + trimethylamine + H(+) = methyl-Co(III)-[trimethylamine-specific corrinoid protein] + dimethylamine. Its function is as follows. Catalyzes the transfer of a methyl group from trimethylamine to the corrinoid cofactor of MttC. The sequence is that of Trimethylamine methyltransferase MttB from Desulfitobacterium hafniense (strain DSM 10664 / DCB-2).